We begin with the raw amino-acid sequence, 472 residues long: Methanethiol oxidase (472 aa).

Alanine 2 bears the N-acetylalanine mark. 2 positions are modified to phosphoserine: serine 111 and serine 467.

The protein belongs to the selenium-binding protein family. In terms of assembly, interacts with USP33. The N-terminus is blocked. In terms of tissue distribution, present in liver and colon (at protein level).

It localises to the nucleus. Its subcellular location is the cytoplasm. The protein localises to the cytosol. It is found in the membrane. It catalyses the reaction methanethiol + O2 + H2O = hydrogen sulfide + formaldehyde + H2O2 + H(+). It functions in the pathway organosulfur degradation. Its function is as follows. Catalyzes the oxidation of methanethiol, an organosulfur compound known to be produced in substantial amounts by gut bacteria. Selenium-binding protein which may be involved in the sensing of reactive xenobiotics in the cytoplasm. May be involved in intra-Golgi protein transport. The chain is Methanethiol oxidase (Selenbp1) from Rattus norvegicus (Rat).